The primary structure comprises 571 residues: Isthmin-2 (571 aa).

An N-terminal signal peptide occupies residues 1 to 26 (MRALRDRAGLLLCVLLLAALLEAALG). Disordered stretches follow at residues 30–60 (KKPR…LKEE), 116–141 (ANTT…LREE), and 257–294 (EKDR…DEEE). The span at 116–131 (ANTTLSTPNPDTQASA) shows a compositional bias: polar residues. A glycan (N-linked (GlcNAc...) asparagine) is linked at asparagine 117. Positions 257 to 268 (EKDRAPGEKGEE) are enriched in basic and acidic residues. A compositionally biased stretch (acidic residues) spans 269–294 (KEEDEDYPSEDIEGEDQEDKEEDEEE). N-linked (GlcNAc...) asparagine glycosylation occurs at asparagine 300. A TSP type-1 domain is found at 327–371 (EPQKEWSPWSPCSGNCSTGKQQRTRPCGYGCTATETRTCDLPSCP). 3 disulfides stabilise this stretch: cysteine 338–cysteine 365, cysteine 342–cysteine 370, and cysteine 353–cysteine 357. Asparagine 392 carries an N-linked (GlcNAc...) asparagine glycan. The 164-residue stretch at 396-559 (MHDQDVDSCE…RACTDNPLEE (164 aa)) folds into the AMOP domain.

Belongs to the isthmin family. Expressed at high levels in the placenta and at moderate levels in the pancreas, kidney, heart, liver, lung, brain and skeletal muscle.

Its subcellular location is the secreted. This chain is Isthmin-2 (ISM2), found in Homo sapiens (Human).